The following is a 700-amino-acid chain: Methionine--tRNA ligase (700 aa).

The 'HIGH' region motif lies at 12–22 (PYANGNFHIGH). Positions 143, 146, 156, and 159 each coordinate Zn(2+). The 'KMSKS' region motif lies at 348-352 (KMSKS). Lys-351 is an ATP binding site. Residues 594-700 (DFSKIDLRIA…AGAQPGMRVH (107 aa)) form the tRNA-binding domain.

It belongs to the class-I aminoacyl-tRNA synthetase family. MetG type 1 subfamily. Homodimer. Zn(2+) serves as cofactor.

It is found in the cytoplasm. It carries out the reaction tRNA(Met) + L-methionine + ATP = L-methionyl-tRNA(Met) + AMP + diphosphate. In terms of biological role, is required not only for elongation of protein synthesis but also for the initiation of all mRNA translation through initiator tRNA(fMet) aminoacylation. The protein is Methionine--tRNA ligase of Albidiferax ferrireducens (strain ATCC BAA-621 / DSM 15236 / T118) (Rhodoferax ferrireducens).